A 225-amino-acid chain; its full sequence is NAD(P)H-quinone oxidoreductase subunit K, chloroplastic (225 aa).

Residues Cys43, Cys44, Cys108, and Cys139 each contribute to the [4Fe-4S] cluster site.

Belongs to the complex I 20 kDa subunit family. In terms of assembly, NDH is composed of at least 16 different subunits, 5 of which are encoded in the nucleus. Requires [4Fe-4S] cluster as cofactor.

It localises to the plastid. Its subcellular location is the chloroplast thylakoid membrane. It catalyses the reaction a plastoquinone + NADH + (n+1) H(+)(in) = a plastoquinol + NAD(+) + n H(+)(out). It carries out the reaction a plastoquinone + NADPH + (n+1) H(+)(in) = a plastoquinol + NADP(+) + n H(+)(out). NDH shuttles electrons from NAD(P)H:plastoquinone, via FMN and iron-sulfur (Fe-S) centers, to quinones in the photosynthetic chain and possibly in a chloroplast respiratory chain. The immediate electron acceptor for the enzyme in this species is believed to be plastoquinone. Couples the redox reaction to proton translocation, and thus conserves the redox energy in a proton gradient. The sequence is that of NAD(P)H-quinone oxidoreductase subunit K, chloroplastic from Nymphaea alba (White water-lily).